The chain runs to 290 residues: UPF0761 membrane protein YihY (290 aa).

A run of 6 helical transmembrane segments spans residues 44-64, 104-124, 140-160, 183-203, 210-230, and 244-264; these read LLSLVPLIAVVFALFAAFPMF, VGACGLIVTALLLMYAIDSAL, FAVYWMILTLGPLLAGASLAI, ILPLLLSWISFWLLYSIVPTT, ALVGAFVAALLFEAGKKGFAL, and VLAVIPILFVWVYWTWCIVLL.

Belongs to the UPF0761 family.

It is found in the cell inner membrane. The chain is UPF0761 membrane protein YihY from Salmonella agona (strain SL483).